Consider the following 381-residue polypeptide: 3-dehydroquinate synthase (381 aa).

NAD(+) contacts are provided by residues 81–86 (EGESSK), 115–119 (GVIGD), 139–140 (TS), K152, and K161. Residues E194, H256, and H274 each coordinate Zn(2+).

This sequence belongs to the sugar phosphate cyclases superfamily. Dehydroquinate synthase family. The cofactor is Co(2+). Requires Zn(2+) as cofactor. It depends on NAD(+) as a cofactor.

The protein localises to the cytoplasm. The enzyme catalyses 7-phospho-2-dehydro-3-deoxy-D-arabino-heptonate = 3-dehydroquinate + phosphate. Its pathway is metabolic intermediate biosynthesis; chorismate biosynthesis; chorismate from D-erythrose 4-phosphate and phosphoenolpyruvate: step 2/7. Functionally, catalyzes the conversion of 3-deoxy-D-arabino-heptulosonate 7-phosphate (DAHP) to dehydroquinate (DHQ). The protein is 3-dehydroquinate synthase of Rhodopseudomonas palustris (strain TIE-1).